The following is a 233-amino-acid chain: Enolase-phosphatase E1 (233 aa).

It belongs to the HAD-like hydrolase superfamily. MasA/MtnC family. As to quaternary structure, monomer. The cofactor is Mg(2+).

It carries out the reaction 5-methylsulfanyl-2,3-dioxopentyl phosphate + H2O = 1,2-dihydroxy-5-(methylsulfanyl)pent-1-en-3-one + phosphate. Its pathway is amino-acid biosynthesis; L-methionine biosynthesis via salvage pathway; L-methionine from S-methyl-5-thio-alpha-D-ribose 1-phosphate: step 3/6. It participates in amino-acid biosynthesis; L-methionine biosynthesis via salvage pathway; L-methionine from S-methyl-5-thio-alpha-D-ribose 1-phosphate: step 4/6. Bifunctional enzyme that catalyzes the enolization of 2,3-diketo-5-methylthiopentyl-1-phosphate (DK-MTP-1-P) into the intermediate 2-hydroxy-3-keto-5-methylthiopentenyl-1-phosphate (HK-MTPenyl-1-P), which is then dephosphorylated to form the acireductone 1,2-dihydroxy-3-keto-5-methylthiopentene (DHK-MTPene). The protein is Enolase-phosphatase E1 of Hahella chejuensis (strain KCTC 2396).